A 643-amino-acid chain; its full sequence is MNIIEIKELNRYFGEGENTVHVLKNISVNIEKGDFVAIIGQSGSGKSTLMNIIGCLDTATSGSYKIDGKETNELTSDQLSDLRSQKFGFIFQRYNLLSALTAAENVALPAIYAGKSQSERLARAEELLKKLGLDGKEKNKPSELSGGQQQRVSIARALMNGGEIILADEPTGALDSHSGENVLEILRQLHSEGHTIIMVTHDKNIAASANRIIEIKDGEIIDDTQKHPVQNTVNNQSKAKSRFGFSKDQLMEAFQMSVSAIIAHKMRSLLTMLGIIIGITSVVSVVALGNGSQQKILSNISGLGTNTMTIFNGTGFGDRRAEQMQNLTVNDANALAKQSYVQNVTPNSSSSGLLIYGNQSFTSTNLKGIGEQYFDVEGMTLKQGRSITAQEVRDNAQVALLDESSKKSIFPNDNPIDKIVMFAKRPFRIIGVVADRQMGAASSSLNIYAPYTTVMNKVTGGTKIDSITVKIADNVNTAVAEKSLTEYLTVRHGKKDFFIMNSDTIKQTIESTTGTMKLLISSIAFISLIVGGIGVMNIMLVSVTERTKEIGVRMAIGARKSNILQQFLIEAILICMIGGISGIMLSLIIGGIFNVFMTDFTMVFSTFSIVAAVLCSTLIGVIFGYMPAKNAAQLDPITALARE.

One can recognise an ABC transporter domain in the interval 4 to 242 (IEIKELNRYF…VNNQSKAKSR (239 aa)). 40–47 (GQSGSGKS) serves as a coordination point for ATP. A run of 4 helical transmembrane segments spans residues 269–289 (LLTM…VALG), 523–543 (IAFI…LVSV), 572–592 (ILIC…IGGI), and 603–623 (VFST…GVIF).

Belongs to the ABC transporter superfamily. Macrolide exporter (TC 3.A.1.122) family. As to quaternary structure, homodimer. Part of the tripartite efflux system MacAB-TolC, which is composed of an inner membrane transporter, MacB, a periplasmic membrane fusion protein, MacA, and an outer membrane component, TolC. The complex forms a large protein conduit and can translocate molecules across both the inner and outer membranes. Interacts with MacA.

The protein localises to the cell inner membrane. Functionally, part of the tripartite efflux system MacAB-TolC. MacB is a non-canonical ABC transporter that contains transmembrane domains (TMD), which form a pore in the inner membrane, and an ATP-binding domain (NBD), which is responsible for energy generation. Confers resistance against macrolides. This is Macrolide export ATP-binding/permease protein MacB from Mannheimia succiniciproducens (strain KCTC 0769BP / MBEL55E).